Here is a 482-residue protein sequence, read N- to C-terminus: Glutamate--tRNA ligase 2 (482 aa).

Positions 16–26 match the 'HIGH' region motif; sequence PSPTGYLHLGN. Zn(2+) is bound by residues C113, C115, C140, and H142. The 'KMSKS' region motif lies at 257-261; the sequence is PLSKR. Residue K260 coordinates ATP.

It belongs to the class-I aminoacyl-tRNA synthetase family. Glutamate--tRNA ligase type 1 subfamily. As to quaternary structure, monomer. Zn(2+) is required as a cofactor.

The protein resides in the cytoplasm. It catalyses the reaction tRNA(Glu) + L-glutamate + ATP = L-glutamyl-tRNA(Glu) + AMP + diphosphate. Catalyzes the attachment of glutamate to tRNA(Glu) in a two-step reaction: glutamate is first activated by ATP to form Glu-AMP and then transferred to the acceptor end of tRNA(Glu). The sequence is that of Glutamate--tRNA ligase 2 from Acidithiobacillus ferrooxidans (strain ATCC 53993 / BNL-5-31) (Leptospirillum ferrooxidans (ATCC 53993)).